Consider the following 229-residue polypeptide: Large ribosomal subunit protein uL1 (229 aa).

This sequence belongs to the universal ribosomal protein uL1 family. In terms of assembly, part of the 50S ribosomal subunit.

Functionally, binds directly to 23S rRNA. The L1 stalk is quite mobile in the ribosome, and is involved in E site tRNA release. In terms of biological role, protein L1 is also a translational repressor protein, it controls the translation of the L11 operon by binding to its mRNA. The protein is Large ribosomal subunit protein uL1 of Rhodopseudomonas palustris (strain TIE-1).